Here is a 464-residue protein sequence, read N- to C-terminus: MIVGAGYFEDSHDQSLMAGSLIHDSNQAPASSENTSIDLQKFKVHPYSTEALSNTANLAEAARAINHLQHQLEIDLEQEVPPVETANWDPAICTIPDHIINHQFSEDPQNILVEQQIQQYDSALYPNGVYTPAPDLLNLMQCTMAPAFPATTSVFGDTTLNGTNYLDLNGELTGVAAVPDSGSGLMFASDSALQLGYHGTQSHLIKDICHSLPQNYGLFPSEDERDVIIGVGSGDLFQEIDDRQFDSVLECRRGKGEFGKGKGKANFATERERREQLNVKFRTLRMLFPNPTKNDRASIVGDAIEYIDELNRTVKELKILVEQKRHGNNRRKVLKLDQEAAADGESSSMRPVRDDQDNQLHGAIRSSWVQRRSKECHVDVRIVDDEVNIKLTEKKKANSLLHAAKVLDEFQLELIHVVGGIIGDHHIFMFNTKVSEGSAVYACAVAKKLLQAVDVQHQALDIFN.

The interval 261-274 is basic motif; degenerate; that stretch reads GKGKANFATERERR. One can recognise a bHLH domain in the interval 261–310; it reads GKGKANFATERERREQLNVKFRTLRMLFPNPTKNDRASIVGDAIEYIDEL. A helix-loop-helix motif region spans residues 275-310; sequence EQLNVKFRTLRMLFPNPTKNDRASIVGDAIEYIDEL. Positions 338 to 357 are disordered; sequence QEAAADGESSSMRPVRDDQD.

It belongs to the bHLH protein family. As to quaternary structure, interacts with TDR.

It is found in the nucleus. Functionally, transcription factor involved in the regulation of tapetum programmed cell death (PCD) and degradation during male reproductive development. Interacts with TDR and promote tapetal PCD by regulating the expression of RTS, and the two lipid-transfer proteins C4 and C6, which function in microspore development. Acts downstream from and interacts with TDR in the regulation of tapetal PCD. Regulates directly the aspartic protease AP25 and AP37 during tapetal PCD. May not target the cysteine protease CP1. In Oryza sativa subsp. japonica (Rice), this protein is Transcription factor EAT1.